The following is a 44-amino-acid chain: Small, acid-soluble spore protein P (44 aa).

A disordered region spans residues M1 to M44. Over residues N8–Q18 the composition is skewed to basic and acidic residues. Residues H26–M44 are compositionally biased toward basic residues.

Belongs to the SspP family.

It localises to the spore core. In Bacillus cereus (strain ATCC 10987 / NRS 248), this protein is Small, acid-soluble spore protein P.